The primary structure comprises 330 residues: Src kinase-associated phosphoprotein 2-A (330 aa).

The segment at 53 to 77 is disordered; the sequence is QDFQDKAETDDQEENDGFSLPPDAV. In terms of domain architecture, PH spans 105 to 208; it reads DYLRAGYLEK…WINVIMNARG (104 aa). Positions 228–261 are disordered; it reads SHEEDIYEELPEESEKPVTGSETPKATPVPVNNT. The segment covering 247–261 has biased composition (polar residues); that stretch reads GSETPKATPVPVNNT. In terms of domain architecture, SH3 spans 268–329; that stretch reads DYANFYRGLW…PKAYIIEMYD (62 aa).

It belongs to the SKAP family. Post-translationally, phosphorylated on tyrosines.

It localises to the cytoplasm. In terms of biological role, may be involved in B-cell and macrophage adhesion processes. May play a role in src signaling pathway. In Xenopus laevis (African clawed frog), this protein is Src kinase-associated phosphoprotein 2-A (skap2-a).